We begin with the raw amino-acid sequence, 498 residues long: tRNA-2-methylthio-N(6)-dimethylallyladenosine synthase (498 aa).

An MTTase N-terminal domain is found at 2–118; it reads PRYSITTFGC…LPGLLGDLAI (117 aa). The [4Fe-4S] cluster site is built by Cys-11, Cys-47, Cys-81, Cys-163, Cys-167, and Cys-170. Positions 149–393 constitute a Radical SAM core domain; that stretch reads PRAAPTAFVT…FEESEALLAA (245 aa). The 72-residue stretch at 396 to 467 folds into the TRAM domain; the sequence is SALVGTTQEV…KHSLQAELTE (72 aa). Residues 469 to 498 are disordered; that stretch reads ARAAARPRQRGGLEPRPARRSLPVVAAEGG.

Belongs to the methylthiotransferase family. MiaB subfamily. As to quaternary structure, monomer. [4Fe-4S] cluster is required as a cofactor.

The protein resides in the cytoplasm. The catalysed reaction is N(6)-dimethylallyladenosine(37) in tRNA + (sulfur carrier)-SH + AH2 + 2 S-adenosyl-L-methionine = 2-methylsulfanyl-N(6)-dimethylallyladenosine(37) in tRNA + (sulfur carrier)-H + 5'-deoxyadenosine + L-methionine + A + S-adenosyl-L-homocysteine + 2 H(+). Catalyzes the methylthiolation of N6-(dimethylallyl)adenosine (i(6)A), leading to the formation of 2-methylthio-N6-(dimethylallyl)adenosine (ms(2)i(6)A) at position 37 in tRNAs that read codons beginning with uridine. The protein is tRNA-2-methylthio-N(6)-dimethylallyladenosine synthase of Sorangium cellulosum (strain So ce56) (Polyangium cellulosum (strain So ce56)).